Here is a 177-residue protein sequence, read N- to C-terminus: Ribosome maturation factor RimP (177 aa).

It belongs to the RimP family.

It is found in the cytoplasm. Functionally, required for maturation of 30S ribosomal subunits. The polypeptide is Ribosome maturation factor RimP (Mycobacterium marinum (strain ATCC BAA-535 / M)).